A 305-amino-acid polypeptide reads, in one-letter code: Ornithine carbamoyltransferase, anabolic (305 aa).

Residues 53-56 (STRT), glutamine 80, arginine 104, and 131-134 (HPCQ) each bind carbamoyl phosphate. Residues asparagine 162, aspartate 219, and 223–224 (SM) each bind L-ornithine. Carbamoyl phosphate-binding positions include 259-260 (CL) and arginine 287.

It belongs to the aspartate/ornithine carbamoyltransferase superfamily. OTCase family. In terms of assembly, homotrimer.

The protein localises to the cytoplasm. It carries out the reaction carbamoyl phosphate + L-ornithine = L-citrulline + phosphate + H(+). It functions in the pathway amino-acid biosynthesis; L-arginine biosynthesis; L-arginine from L-ornithine and carbamoyl phosphate: step 1/3. Reversibly catalyzes the transfer of the carbamoyl group from carbamoyl phosphate (CP) to the N(epsilon) atom of ornithine (ORN) to produce L-citrulline, which is a substrate for argininosuccinate synthetase (ArgG) involved in the final step in arginine biosynthesis. The sequence is that of Ornithine carbamoyltransferase, anabolic from Pseudomonas aeruginosa (strain ATCC 15692 / DSM 22644 / CIP 104116 / JCM 14847 / LMG 12228 / 1C / PRS 101 / PAO1).